The chain runs to 239 residues: mRNA turnover protein 4 homolog (239 aa).

The interval F215 to D239 is disordered. S225, S229, and S233 each carry phosphoserine. Residues S229–D239 are compositionally biased toward acidic residues.

This sequence belongs to the universal ribosomal protein uL10 family. In terms of assembly, associates with the pre-60S ribosomal particle. Interacts with MINAS-60 (product of an alternative open reading frame of RBM10).

It is found in the nucleus. It localises to the nucleolus. Its subcellular location is the cytoplasm. Its function is as follows. Component of the ribosome assembly machinery. Nuclear paralog of the ribosomal protein P0, it binds pre-60S subunits at an early stage of assembly in the nucleolus, and is replaced by P0 in cytoplasmic pre-60S subunits and mature 80S ribosomes. The chain is mRNA turnover protein 4 homolog (MRTO4) from Homo sapiens (Human).